A 289-amino-acid polypeptide reads, in one-letter code: 3-methyl-2-oxobutanoate hydroxymethyltransferase (289 aa).

The span at 1-15 (MSTTFQLDTSTSRAN) shows a compositional bias: polar residues. The tract at residues 1 to 20 (MSTTFQLDTSTSRANPTPAP) is disordered. The Mg(2+) site is built by aspartate 67 and aspartate 106. 3-methyl-2-oxobutanoate-binding positions include 67–68 (DS), aspartate 106, and lysine 136. Glutamate 138 lines the Mg(2+) pocket. The active-site Proton acceptor is glutamate 205.

The protein belongs to the PanB family. Homodecamer; pentamer of dimers. It depends on Mg(2+) as a cofactor.

The protein localises to the cytoplasm. It carries out the reaction 3-methyl-2-oxobutanoate + (6R)-5,10-methylene-5,6,7,8-tetrahydrofolate + H2O = 2-dehydropantoate + (6S)-5,6,7,8-tetrahydrofolate. It functions in the pathway cofactor biosynthesis; (R)-pantothenate biosynthesis; (R)-pantoate from 3-methyl-2-oxobutanoate: step 1/2. In terms of biological role, catalyzes the reversible reaction in which hydroxymethyl group from 5,10-methylenetetrahydrofolate is transferred onto alpha-ketoisovalerate to form ketopantoate. In Novosphingobium aromaticivorans (strain ATCC 700278 / DSM 12444 / CCUG 56034 / CIP 105152 / NBRC 16084 / F199), this protein is 3-methyl-2-oxobutanoate hydroxymethyltransferase.